The following is a 331-amino-acid chain: Glycerol-3-phosphate dehydrogenase [NAD(P)+] (331 aa).

NADPH is bound by residues tryptophan 11, arginine 30, and lysine 105. 3 residues coordinate sn-glycerol 3-phosphate: lysine 105, glycine 134, and serine 136. Alanine 138 lines the NADPH pocket. Sn-glycerol 3-phosphate is bound by residues lysine 189, aspartate 242, serine 252, arginine 253, and asparagine 254. Lysine 189 functions as the Proton acceptor in the catalytic mechanism. Arginine 253 lines the NADPH pocket. NADPH is bound by residues valine 277 and glutamate 279.

It belongs to the NAD-dependent glycerol-3-phosphate dehydrogenase family.

It localises to the cytoplasm. It catalyses the reaction sn-glycerol 3-phosphate + NAD(+) = dihydroxyacetone phosphate + NADH + H(+). The enzyme catalyses sn-glycerol 3-phosphate + NADP(+) = dihydroxyacetone phosphate + NADPH + H(+). The protein operates within membrane lipid metabolism; glycerophospholipid metabolism. Functionally, catalyzes the reduction of the glycolytic intermediate dihydroxyacetone phosphate (DHAP) to sn-glycerol 3-phosphate (G3P), the key precursor for phospholipid synthesis. The polypeptide is Glycerol-3-phosphate dehydrogenase [NAD(P)+] (Herminiimonas arsenicoxydans).